The primary structure comprises 1414 residues: DNA-directed RNA polymerase subunit beta' (1414 aa).

The Zn(2+) site is built by Cys70, Cys72, Cys85, and Cys88. Residues Asp460, Asp462, and Asp464 each contribute to the Mg(2+) site. Zn(2+) is bound by residues Cys815, Cys889, Cys896, and Cys899. A disordered region spans residues 1395-1414; the sequence is EAEAQFADISSTPDSDTDAS.

It belongs to the RNA polymerase beta' chain family. As to quaternary structure, the RNAP catalytic core consists of 2 alpha, 1 beta, 1 beta' and 1 omega subunit. When a sigma factor is associated with the core the holoenzyme is formed, which can initiate transcription. Mg(2+) serves as cofactor. Requires Zn(2+) as cofactor.

It carries out the reaction RNA(n) + a ribonucleoside 5'-triphosphate = RNA(n+1) + diphosphate. Its function is as follows. DNA-dependent RNA polymerase catalyzes the transcription of DNA into RNA using the four ribonucleoside triphosphates as substrates. In Herminiimonas arsenicoxydans, this protein is DNA-directed RNA polymerase subunit beta'.